We begin with the raw amino-acid sequence, 366 residues long: Polyamine aminopropyltransferase 2 (366 aa).

Residues 20 to 58 (KDKRSELDSDKFELEQQDKHDIQDKQDKQDEQNKQDKQV) show a composition bias toward basic and acidic residues. Residues 20–61 (KDKRSELDSDKFELEQQDKHDIQDKQDKQDEQNKQDKQVQSE) form a disordered region. A PABS domain is found at 74-305 (DVWDEISLKE…TDWGFHLATN (232 aa)). Q100 lines the S-methyl-5'-thioadenosine pocket. Positions 129 and 153 each coordinate spermidine. Residues D173 and 207-208 (DA) each bind S-methyl-5'-thioadenosine. Catalysis depends on D225, which acts as the Proton acceptor.

Belongs to the spermidine/spermine synthase family. In terms of assembly, homodimer or homotetramer.

Its subcellular location is the cytoplasm. The enzyme catalyses S-adenosyl 3-(methylsulfanyl)propylamine + putrescine = S-methyl-5'-thioadenosine + spermidine + H(+). Its pathway is amine and polyamine biosynthesis; spermidine biosynthesis; spermidine from putrescine: step 1/1. Catalyzes the irreversible transfer of a propylamine group from the amino donor S-adenosylmethioninamine (decarboxy-AdoMet) to putrescine (1,4-diaminobutane) to yield spermidine. This Bacillus cereus (strain ATCC 14579 / DSM 31 / CCUG 7414 / JCM 2152 / NBRC 15305 / NCIMB 9373 / NCTC 2599 / NRRL B-3711) protein is Polyamine aminopropyltransferase 2.